The sequence spans 9159 residues: Halomucin (9159 aa).

An N-terminal signal peptide occupies residues 1–30 (MSQTAKPIFAVVVALIVLISGVAFIGSVSA). 2 consecutive C-type lectin domains span residues 644-776 (TTGN…YLVE) and 929-1060 (YDGH…VEYG). Polar residues predominate over residues 1310-1332 (QPQTVNDPDAVSTRNNNVGSNGL). Residues 1310 to 1351 (QPQTVNDPDAVSTRNNNVGSNGLDSKIEDDQNNGADGNPHGT) are disordered. Residues 1756-3380 (VGGLIGESSG…GFNGEHVGGL (1625 aa)) are V-G-G-L motif-rich region. Disordered stretches follow at residues 3484 to 3514 (GATAQSDATGSGTPGGATGYGSVGDTTPAPQ), 4878 to 4912 (ESYWDKGATDKSDATGSDTPATVSGYGSVGDTTPA), 6570 to 6589 (TDSATGSSVGGLIGSQSSGQ), 7047 to 7097 (TPTV…GINT), 7660 to 7702 (ATDS…NPGG), 7888 to 7923 (IDGDGLADDNEATGVPTDNDDDNDGIPDDEDQEPAL), 8212 to 8237 (STQQKRVGPLVSEDPSTVSWPSGAAD), and 8369 to 8614 (DSTA…GSST). Gly residues predominate over residues 3495 to 3505 (GTPGGATGYGS). Residues 4880–4890 (YWDKGATDKSD) are compositionally biased toward basic and acidic residues. Polar residues-rich tracts occupy residues 7048–7057 (PTVTINSSSD) and 7068–7078 (GEDSTSSNESS). The span at 7079–7092 (DGTESDQGDPEDDI) shows a compositional bias: acidic residues. Over residues 7681 to 7698 (VTGSTPTFVSSGTVTTPE) the composition is skewed to polar residues. The Cadherin domain occupies 7686 to 7793 (PTFVSSGTVT…ITDVDEQPTG (108 aa)). 2 stretches are compositionally biased toward acidic residues: residues 7888 to 7898 (IDGDGLADDNE) and 7905 to 7920 (DNDDDNDGIPDDEDQE). The segment covering 8378 to 8390 (ALEDDSSNQDSGD) has biased composition (acidic residues). 2 stretches are compositionally biased toward low complexity: residues 8391–8529 (DSSN…SSQN) and 8538–8548 (SAAAVGAESGS). Composition is skewed to gly residues over residues 8549-8566 (EMGGETGGESQAGGGDGS) and 8574-8608 (AGGGSSGGSSSGDSGGSSSGNSGGSSSGNSGGSSS).

Post-translationally, probably glycosylated with sugar containing sialic acid. This may further contribute to its overall negative charge, thereby creating an aqueous shield covering the cells.

Its subcellular location is the secreted. May protect the organism from desiccation stress. May also contribute to the rigidity and maintenance of the unique square cell morphology of H.walsbyi. In Haloquadratum walsbyi (strain DSM 16790 / HBSQ001), this protein is Halomucin (hmu).